We begin with the raw amino-acid sequence, 736 residues long: Catalase-peroxidase (736 aa).

Residues 1 to 21 form a disordered region; it reads MSNEQKCPFSGTHGARTTVGT. Positions 96 to 224 form a cross-link, tryptophyl-tyrosyl-methioninium (Trp-Tyr) (with M-250); that stretch reads WHSAGTYRTG…LAAVQMGLIY (129 aa). Histidine 97 (proton acceptor) is an active-site residue. The segment at residues 224-250 is a cross-link (tryptophyl-tyrosyl-methioninium (Tyr-Met) (with W-96)); the sequence is YVNPEGPDGNPDPVASGRDIRETFARM. Histidine 265 contributes to the heme b binding site.

This sequence belongs to the peroxidase family. Peroxidase/catalase subfamily. In terms of assembly, homodimer or homotetramer. Requires heme b as cofactor. In terms of processing, formation of the three residue Trp-Tyr-Met cross-link is important for the catalase, but not the peroxidase activity of the enzyme.

It carries out the reaction H2O2 + AH2 = A + 2 H2O. The catalysed reaction is 2 H2O2 = O2 + 2 H2O. Its function is as follows. Bifunctional enzyme with both catalase and broad-spectrum peroxidase activity. The protein is Catalase-peroxidase of Dechloromonas aromatica (strain RCB).